The chain runs to 591 residues: Metalloendopeptidase OPG085 (591 aa).

His-41 contacts Zn(2+). The active site involves Glu-44. His-45 contributes to the Zn(2+) binding site.

It belongs to the peptidase M44 family. The cofactor is Zn(2+). Undergoes proteolytic processing during the course of infection. May be cleaved into 46 kDa and 22 kDa products (Potential).

Its subcellular location is the virion. Functionally, probably involved in maturation of some viral proteins by processing them preferentially at Ala-Gly-|-Ser/Thr/Lys motifs. Does not seem to be responsible for the cleavage of major core proteins. The chain is Metalloendopeptidase OPG085 (OPG085) from Homo sapiens (Human).